The following is a 297-amino-acid chain: Nucleotide-binding protein DSY4845 (297 aa).

ATP is bound at residue G13 to T20. D64–G67 serves as a coordination point for GTP.

Belongs to the RapZ-like family.

Displays ATPase and GTPase activities. The chain is Nucleotide-binding protein DSY4845 from Desulfitobacterium hafniense (strain Y51).